The sequence spans 304 residues: Large ribosomal subunit protein uL18y (304 aa).

It belongs to the universal ribosomal protein uL18 family. In terms of assembly, component of the large ribosomal subunit (LSU).

Its subcellular location is the cytoplasm. The protein localises to the nucleus. In terms of biological role, component of the ribosome, a large ribonucleoprotein complex responsible for the synthesis of proteins in the cell. The small ribosomal subunit (SSU) binds messenger RNAs (mRNAs) and translates the encoded message by selecting cognate aminoacyl-transfer RNA (tRNA) molecules. The large subunit (LSU) contains the ribosomal catalytic site termed the peptidyl transferase center (PTC), which catalyzes the formation of peptide bonds, thereby polymerizing the amino acids delivered by tRNAs into a polypeptide chain. The nascent polypeptides leave the ribosome through a tunnel in the LSU and interact with protein factors that function in enzymatic processing, targeting, and the membrane insertion of nascent chains at the exit of the ribosomal tunnel. In Oryza sativa subsp. japonica (Rice), this protein is Large ribosomal subunit protein uL18y (RPL5B).